A 513-amino-acid polypeptide reads, in one-letter code: ATP synthase subunit alpha (513 aa).

169-176 (GDRQIGKT) contacts ATP.

This sequence belongs to the ATPase alpha/beta chains family. In terms of assembly, F-type ATPases have 2 components, CF(1) - the catalytic core - and CF(0) - the membrane proton channel. CF(1) has five subunits: alpha(3), beta(3), gamma(1), delta(1), epsilon(1). CF(0) has three main subunits: a(1), b(2) and c(9-12). The alpha and beta chains form an alternating ring which encloses part of the gamma chain. CF(1) is attached to CF(0) by a central stalk formed by the gamma and epsilon chains, while a peripheral stalk is formed by the delta and b chains.

The protein resides in the cell inner membrane. It catalyses the reaction ATP + H2O + 4 H(+)(in) = ADP + phosphate + 5 H(+)(out). Its function is as follows. Produces ATP from ADP in the presence of a proton gradient across the membrane. The alpha chain is a regulatory subunit. The protein is ATP synthase subunit alpha of Shewanella sediminis (strain HAW-EB3).